A 490-amino-acid chain; its full sequence is ATP synthase subunit beta (490 aa).

Position 175–182 (175–182 (GGAGVGKT)) interacts with ATP.

Belongs to the ATPase alpha/beta chains family. F-type ATPases have 2 components, CF(1) - the catalytic core - and CF(0) - the membrane proton channel. CF(1) has five subunits: alpha(3), beta(3), gamma(1), delta(1), epsilon(1). CF(0) has three main subunits: a(1), b(2) and c(9-12). The alpha and beta chains form an alternating ring which encloses part of the gamma chain. CF(1) is attached to CF(0) by a central stalk formed by the gamma and epsilon chains, while a peripheral stalk is formed by the delta and b chains.

It is found in the cell membrane. It carries out the reaction ATP + H2O + 4 H(+)(in) = ADP + phosphate + 5 H(+)(out). Its function is as follows. Produces ATP from ADP in the presence of a proton gradient across the membrane. The catalytic sites are hosted primarily by the beta subunits. The chain is ATP synthase subunit beta from Acidothermus cellulolyticus (strain ATCC 43068 / DSM 8971 / 11B).